The primary structure comprises 407 residues: Protein trichome birefringence-like 12 (407 aa).

A helical; Signal-anchor for type II membrane protein transmembrane segment spans residues 21 to 41; that stretch reads SLLPRILLLSLLLLLFYSLIL. Positions 130 to 132 match the GDS motif motif; that stretch reads GDS. The DCXHWCLPGXXDXWN motif motif lies at 379 to 393; sequence DCMHWCLPGVPDTWV.

The protein belongs to the PC-esterase family. TBL subfamily.

The protein localises to the membrane. May act as a bridging protein that binds pectin and other cell wall polysaccharides. Probably involved in maintaining esterification of pectins. May be involved in the specific O-acetylation of cell wall polymers. This is Protein trichome birefringence-like 12 (TBL12) from Arabidopsis thaliana (Mouse-ear cress).